The following is a 150-amino-acid chain: Large ribosomal subunit protein bL9 (150 aa).

Belongs to the bacterial ribosomal protein bL9 family.

Functionally, binds to the 23S rRNA. The chain is Large ribosomal subunit protein bL9 from Burkholderia multivorans (strain ATCC 17616 / 249).